Here is a 181-residue protein sequence, read N- to C-terminus: Shikimate kinase 2 (181 aa).

An ATP-binding site is contributed by 12-17 (GCGKTT). Thr-16 and Asp-32 together coordinate Mg(2+). Asp-34, Arg-58, and Gly-79 together coordinate substrate. Positions 112–126 (EAEPEADLRPTLTGK) are LID domain. Residue Arg-120 coordinates ATP. Arg-139 lines the substrate pocket.

The protein belongs to the shikimate kinase family. AroL subfamily. As to quaternary structure, monomer. Requires Mg(2+) as cofactor.

Its subcellular location is the cytoplasm. The catalysed reaction is shikimate + ATP = 3-phosphoshikimate + ADP + H(+). The protein operates within metabolic intermediate biosynthesis; chorismate biosynthesis; chorismate from D-erythrose 4-phosphate and phosphoenolpyruvate: step 5/7. Functionally, catalyzes the specific phosphorylation of the 3-hydroxyl group of shikimic acid using ATP as a cosubstrate. In Salmonella dublin (strain CT_02021853), this protein is Shikimate kinase 2.